The following is a 595-amino-acid chain: Chaperone protein HscA homolog (595 aa).

This sequence belongs to the heat shock protein 70 family.

Its function is as follows. Chaperone involved in the maturation of iron-sulfur cluster-containing proteins. Has a low intrinsic ATPase activity which is markedly stimulated by HscB. The chain is Chaperone protein HscA homolog from Rickettsia conorii (strain ATCC VR-613 / Malish 7).